A 156-amino-acid chain; its full sequence is Crossover junction endodeoxyribonuclease RuvC (156 aa).

Residues Asp7, Glu66, and Asp138 contribute to the active site. 3 residues coordinate Mg(2+): Asp7, Glu66, and Asp138.

This sequence belongs to the RuvC family. As to quaternary structure, homodimer which binds Holliday junction (HJ) DNA. The HJ becomes 2-fold symmetrical on binding to RuvC with unstacked arms; it has a different conformation from HJ DNA in complex with RuvA. In the full resolvosome a probable DNA-RuvA(4)-RuvB(12)-RuvC(2) complex forms which resolves the HJ. Mg(2+) serves as cofactor.

The protein resides in the cytoplasm. It carries out the reaction Endonucleolytic cleavage at a junction such as a reciprocal single-stranded crossover between two homologous DNA duplexes (Holliday junction).. The RuvA-RuvB-RuvC complex processes Holliday junction (HJ) DNA during genetic recombination and DNA repair. Endonuclease that resolves HJ intermediates. Cleaves cruciform DNA by making single-stranded nicks across the HJ at symmetrical positions within the homologous arms, yielding a 5'-phosphate and a 3'-hydroxyl group; requires a central core of homology in the junction. The consensus cleavage sequence is 5'-(A/T)TT(C/G)-3'. Cleavage occurs on the 3'-side of the TT dinucleotide at the point of strand exchange. HJ branch migration catalyzed by RuvA-RuvB allows RuvC to scan DNA until it finds its consensus sequence, where it cleaves and resolves the cruciform DNA. In Ehrlichia chaffeensis (strain ATCC CRL-10679 / Arkansas), this protein is Crossover junction endodeoxyribonuclease RuvC.